We begin with the raw amino-acid sequence, 337 residues long: MITLGEYIIKKQHESPEATGELSSILGAIRLATKVVNRDINKAGLVDIIGATGVENVQGEVQQKMDLYANDVFKAALEARGEVCGVASEEEDEFVSFNDQRCINSKYVVLMDPLDGSSNIDVNVSVGTIFSIYRRISEPGKPAILEDFLQPGTEQVAAGYVIYGSSTMLVYTTGYGTHGFTCDPSLGTFYLSHENMKIPDNGSIYSINEGNYLKFPQGVKKYLKYCQEIDGPTNRPYTSRYIGSLVSDFHRNLLKGGIYIYPSTASAPKGKLRLLYECNPMAFIMEQAGGRATDGFNRRIMELTPTELHQRVPFFCGSSKMVDKVEAMMEEYSSEEK.

Glutamate 89, aspartate 112, leucine 114, and aspartate 115 together coordinate Mg(2+). Substrate contacts are provided by residues aspartate 115–serine 118, asparagine 208, tyrosine 241, and lysine 271. Glutamate 277 is a Mg(2+) binding site.

It belongs to the FBPase class 1 family. Homotetramer. Mg(2+) serves as cofactor.

The protein resides in the cytoplasm. The catalysed reaction is beta-D-fructose 1,6-bisphosphate + H2O = beta-D-fructose 6-phosphate + phosphate. It participates in carbohydrate biosynthesis; gluconeogenesis. The polypeptide is Fructose-1,6-bisphosphatase class 1 (Psychromonas ingrahamii (strain DSM 17664 / CCUG 51855 / 37)).